The following is a 165-amino-acid chain: uncharacterized protein (165 aa).

The chain crosses the membrane as a helical span at residues 7–29 (YPLIFTAFLLIAFCLIFFSYHLI).

The protein resides in the membrane. This is an uncharacterized protein from Bacillus subtilis (strain 168).